The primary structure comprises 87 residues: Large ribosomal subunit protein bL27 (87 aa).

Residues 1–25 are disordered; that stretch reads MAHKKGASSSRNGRDSNAQRLGVKR. Positions 7–19 are enriched in polar residues; it reads ASSSRNGRDSNAQ.

This sequence belongs to the bacterial ribosomal protein bL27 family.

This is Large ribosomal subunit protein bL27 from Rhodococcus jostii (strain RHA1).